The primary structure comprises 438 residues: 2-(3-amino-3-carboxypropyl)histidine synthase subunit 1 (438 aa).

Positions 1-24 (MAALVVSETAEPGSRVGPGRGRIS) are disordered. [4Fe-4S] cluster-binding residues include Cys-110, Cys-214, and Cys-342. Residues 402-438 (LCQPASDKVQQGSRGGSPAPACESCNCADQKATSPAP) form a disordered region. Ser-418 is modified (phosphoserine).

It belongs to the DPH1/DPH2 family. DPH1 subfamily. In terms of assembly, component of the 2-(3-amino-3-carboxypropyl)histidine synthase complex composed of DPH1, DPH2, DPH3 and a NADH-dependent reductase. Interacts with DPH2. Interacts with RBM8A. It depends on [4Fe-4S] cluster as a cofactor. In terms of tissue distribution, strongly expressed in kidney and liver. Moderately expressed in brain, skin and testis. Weakly expressed in heart, lung, small intestine, spleen, stomach and thymus.

Its subcellular location is the nucleus. It is found in the cytoplasm. It carries out the reaction L-histidyl-[translation elongation factor 2] + S-adenosyl-L-methionine = 2-[(3S)-amino-3-carboxypropyl]-L-histidyl-[translation elongation factor 2] + S-methyl-5'-thioadenosine + H(+). It participates in protein modification; peptidyl-diphthamide biosynthesis. Functionally, catalyzes the first step of diphthamide biosynthesis, a post-translational modification of histidine which occurs in elongation factor 2. DPH1 and DPH2 transfer a 3-amino-3-carboxypropyl (ACP) group from S-adenosyl-L-methionine (SAM) to a histidine residue, the reaction is assisted by a reduction system comprising DPH3 and a NADH-dependent reductase. Acts as a tumor suppressor. This Mus musculus (Mouse) protein is 2-(3-amino-3-carboxypropyl)histidine synthase subunit 1.